The following is a 265-amino-acid chain: Elongation factor 1-delta (265 aa).

Positions 31–54 (MGSASNKPHNSPQSAASALSNSGD) are enriched in polar residues. Disordered stretches follow at residues 31 to 64 (MGSA…RVAN) and 118 to 155 (KVQV…DAEA). Positions 130–153 (GTGEDDDDDDDIDLFGSDNEEEDA) are enriched in acidic residues.

It belongs to the EF-1-beta/EF-1-delta family. As to quaternary structure, EF-1 is composed of 4 subunits: alpha, beta, delta, and gamma.

Functionally, EF-1-beta and EF-1-delta stimulate the exchange of GDP bound to EF-1-alpha to GTP. This Xenopus laevis (African clawed frog) protein is Elongation factor 1-delta (eef1d).